The primary structure comprises 310 residues: Olfactory receptor 2A25 (310 aa).

At 1 to 24 (MGGNQTSITEFLLLGFPIGPRIQM) the chain is on the extracellular side. Asn-4 carries an N-linked (GlcNAc...) asparagine glycan. Residues 25 to 48 (LLFGLFSLFYIFILLGNGTILGLI) form a helical membrane-spanning segment. The Cytoplasmic segment spans residues 49 to 56 (SLDSRLHT). Residues 57–78 (PMYFFLSHLAVVDIACACSTVP) traverse the membrane as a helical segment. Over 79 to 99 (QMLVNLLHPAKPISFAGCMTQ) the chain is Extracellular. Cysteines 96 and 188 form a disulfide. The chain crosses the membrane as a helical span at residues 100-119 (MFLFLSFAHTECLLLVVMSY). At 120 to 138 (DRYVAICHPLRYSTIMTWK) the chain is on the cytoplasmic side. Residues 139–157 (VCITLALTSWILGVLLALV) form a helical membrane-spanning segment. The Extracellular segment spans residues 158–195 (HLVLLLPLSFCGPQKLNHFFCEIMAVLKLACADTHINE). The helical transmembrane segment at 196–218 (VMVLAGAVSVLVGAFFSTVISYV) threads the bilayer. At 219–235 (HILCAILKIQSGEGCQK) the chain is on the cytoplasmic side. A helical membrane pass occupies residues 236–258 (AFSICSSHLCVVGLFYGTAIIMY). The Extracellular portion of the chain corresponds to 259-271 (VEPQYESPKEQKK). A helical transmembrane segment spans residues 272 to 291 (YLLLFHSLFNPMLNPLIYSL). Over 292–310 (RNKEVQGTLKRMLEKKRTS) the chain is Cytoplasmic.

This sequence belongs to the G-protein coupled receptor 1 family.

Its subcellular location is the cell membrane. Functionally, odorant receptor. In Homo sapiens (Human), this protein is Olfactory receptor 2A25 (OR2A25).